Reading from the N-terminus, the 187-residue chain is Peptidyl-tRNA hydrolase (187 aa).

Tyrosine 14 provides a ligand contact to tRNA. Histidine 19 (proton acceptor) is an active-site residue. Tyrosine 63 and asparagine 65 together coordinate tRNA.

The protein belongs to the PTH family. Monomer.

The protein resides in the cytoplasm. The catalysed reaction is an N-acyl-L-alpha-aminoacyl-tRNA + H2O = an N-acyl-L-amino acid + a tRNA + H(+). Functionally, hydrolyzes ribosome-free peptidyl-tRNAs (with 1 or more amino acids incorporated), which drop off the ribosome during protein synthesis, or as a result of ribosome stalling. Its function is as follows. Catalyzes the release of premature peptidyl moieties from peptidyl-tRNA molecules trapped in stalled 50S ribosomal subunits, and thus maintains levels of free tRNAs and 50S ribosomes. In Thermodesulfovibrio yellowstonii (strain ATCC 51303 / DSM 11347 / YP87), this protein is Peptidyl-tRNA hydrolase.